The primary structure comprises 1523 residues: MADRGCPLEAAPLPAEVLESLAELELELSEGDITQKGYEKKRAKLLARYIPLIQDVHTEAVQAALAKYKERKMPMPSKRRSALVHSSVETYTPPDTSSASEDEGSLRRPGRLTSTLLQSHSGIEPWLDRVIQGSSTSSSASSTSSHPGGRPAAAPSASTALAGLTAHAHIDLHSAPPDVTTGLVEHSSYERPQMASVRGIPRGHGRNVLETADGVPVNSRVSSKIQQLLNTLKRPKRPPLKEFFVDDFEELLEVQQPDPNQPKPEGDQMAVLKGEPLSVGTNGPLSLLAALQLWGTTQPKAPCLTALDTAGKATCTLTYGKLWSRSLKLAYTLLNKLTSKNEPLLNPGDRVALVFPNSDPVMFMVAFYGCLLAELVPVPIEVPLTRKDAGSQQVGFLLGSCGVTLALTTDACQKGLPKAPTGEVATFKGWPPLAWLVIDGKHLTRPPKDWYPLAQDTGSRTAYIEYKTSKEGSTVGVTVSHSSLLAQCQALTQACGYTEAETLTNVLDFKRDAGLWHGVLTSVMNRMHVITIPYALMKVNPLSWIQKVCSYKARAALVKSRDMHWSLLAQRGQRDVCLSSLRMLIVADGANPWSISSCDAFLNVFQSRGLRPEVICPCASSPEALTVAIRRPPDLGGPPPRKAVLSMNGLSYGVIRVDTEEKLSVLTVQDVGQVMPGASVCVVKVDGAPYLCKTDEIGEICVNSVATGTAYYGLLGITKNTFETVPVTADGVPVSDRPFTRTGLLGFIGPDNLVFVVGKLDGLMVVGVRRHNADDIVATALAVEPMKFVYRGRIAVFSVTVLHDDRIVLVAEQRPDASEEDSFQWMSRVLQAIDSIHQVGVYCLALVPANTLPKAPLGGIHISETKQRFLEGTLHPCNVLMCPHTCVTNLPKPRQKQPEVGPASMIVGNLVAGKRIAQASGRELAHLEDSDQARKFLFLADVLQWRAHTTPDHPLFLLLNAKGTVTSTATCIQLHKRAERVAAALMEKGRLDAGDHVALVYPPGVDLIAAFYGCLYCGCVPVTVRPPHPQNLGTTLPTVKMIVEVSKSACVLSTQAITRLLKSKEAAAAVDVRTWPTILDTDDIPKKKVASIFRPPSPDVLAYLDFSVSTTGILAGVKMSHAATSALCRSIKLQCELYPSRQIAICLDPYCGLGFALWCLCSVYSGHQSVLVPPLELESNVSLWLSAVSQYKARVTFCSYSVMEMCTKGLGAQTGALRMKGVNLSCVRTCMVVAEERPRISLTQSFSKLFKDLGLPARAVSTTFGCRVNVAICLQGTTGPDPTTVYVDMRALRHDRVRLVERGSPHSLPLMESGKILPGVKVIIAHTETKGPLGDSHLGEIWVSSPHNATGYYTVYGEETLHADHFSARLSFGDTQTIWARTGYLGFLRRTELTDASGERHDALYVVGSLDETLELRGMRYHPIDIETSVIRAHRSIAECAVFTWTNLLVVVVELDGLEQDALDLVALVTNVVLEEHYLVVGVVVIVDPGVIPINSRGEKQRMHLRDGFLADQLDPIYVAYNM.

The DMAP1-binding domain maps to 9–105; the sequence is EAAPLPAEVL…TSSASEDEGS (97 aa). Residues 72-110 form a disordered region; that stretch reads KMPMPSKRRSALVHSSVETYTPPDTSSASEDEGSLRRPG. Polar residues predominate over residues 87–99; it reads SVETYTPPDTSSA. Thr92 and Thr115 each carry phosphothreonine. The tract at residues 132–158 is disordered; that stretch reads QGSSTSSSASSTSSHPGGRPAAAPSAS. A compositionally biased stretch (low complexity) spans 134 to 158; it reads SSTSSSASSTSSHPGGRPAAAPSAS. Short sequence motifs (PXXP motif; required for interaction with CTTN) lie at residues 235 to 238 and 259 to 262; these read PKRP and PNQP.

The protein belongs to the DIP2 family. In terms of assembly, interacts with FSTL1; DIP2A may act as a cell surface receptor for FSTL1. Interacts (via N-terminus) with CTTN (via SH3 domain); the interaction promotes acetylation of CTTN and is required for proper synaptic transmission. Interacts with SHANK3. Detected in heart, liver, spleen, lung, kidney and brain with highest levels in brain (at protein level). In adult cortex, preferentially expressed in excitatory neurons. Broadly expressed in neuronal, reproductive and vascular tissues as well as in heart, kidney, liver and lung with expression detected in neurons, mesenchyme, endothelium, smooth muscle cells and cardiomyocytes. Expressed in ectoderm-derived tissues in the developing embryo. Expressed in the developing nervous system.

The protein resides in the cell membrane. It localises to the mitochondrion. It is found in the cell projection. Its subcellular location is the dendritic spine. It carries out the reaction acetate + ATP + CoA = acetyl-CoA + AMP + diphosphate. Catalyzes the de novo synthesis of acetyl-CoA in vitro. Promotes acetylation of CTTN, possibly by providing the acetyl donor, ensuring correct dendritic spine morphology and synaptic transmission. Binds to follistatin-related protein FSTL1 and may act as a cell surface receptor for FSTL1, contributing to AKT activation and subsequent FSTL1-induced survival and function of endothelial cells and cardiac myocytes. This Mus musculus (Mouse) protein is Disco-interacting protein 2 homolog A (Dip2a).